Reading from the N-terminus, the 415-residue chain is Serine hydroxymethyltransferase (415 aa).

(6S)-5,6,7,8-tetrahydrofolate is bound by residues Leu120 and 124–126 (GHL). Lys229 bears the N6-(pyridoxal phosphate)lysine mark.

It belongs to the SHMT family. In terms of assembly, homodimer. It depends on pyridoxal 5'-phosphate as a cofactor.

Its subcellular location is the cytoplasm. It catalyses the reaction (6R)-5,10-methylene-5,6,7,8-tetrahydrofolate + glycine + H2O = (6S)-5,6,7,8-tetrahydrofolate + L-serine. The protein operates within one-carbon metabolism; tetrahydrofolate interconversion. It participates in amino-acid biosynthesis; glycine biosynthesis; glycine from L-serine: step 1/1. Catalyzes the reversible interconversion of serine and glycine with tetrahydrofolate (THF) serving as the one-carbon carrier. This reaction serves as the major source of one-carbon groups required for the biosynthesis of purines, thymidylate, methionine, and other important biomolecules. Also exhibits THF-independent aldolase activity toward beta-hydroxyamino acids, producing glycine and aldehydes, via a retro-aldol mechanism. This Desulforudis audaxviator (strain MP104C) protein is Serine hydroxymethyltransferase.